The following is a 475-amino-acid chain: Ribulose bisphosphate carboxylase large chain (475 aa).

A propeptide spanning residues 1–2 is cleaved from the precursor; it reads MS. At Pro3 the chain carries N-acetylproline. Lys14 bears the N6,N6,N6-trimethyllysine mark. Residues Asn123 and Thr173 each coordinate substrate. Lys175 functions as the Proton acceptor in the catalytic mechanism. Lys177 lines the substrate pocket. Lys201, Asp203, and Glu204 together coordinate Mg(2+). Lys201 is modified (N6-carboxylysine). His294 acts as the Proton acceptor in catalysis. Substrate contacts are provided by Arg295, His327, and Ser379.

This sequence belongs to the RuBisCO large chain family. Type I subfamily. As to quaternary structure, heterohexadecamer of 8 large chains and 8 small chains; disulfide-linked. The disulfide link is formed within the large subunit homodimers. The cofactor is Mg(2+). Post-translationally, the disulfide bond which can form in the large chain dimeric partners within the hexadecamer appears to be associated with oxidative stress and protein turnover.

The protein localises to the plastid. It localises to the chloroplast. The enzyme catalyses 2 (2R)-3-phosphoglycerate + 2 H(+) = D-ribulose 1,5-bisphosphate + CO2 + H2O. It catalyses the reaction D-ribulose 1,5-bisphosphate + O2 = 2-phosphoglycolate + (2R)-3-phosphoglycerate + 2 H(+). Functionally, ruBisCO catalyzes two reactions: the carboxylation of D-ribulose 1,5-bisphosphate, the primary event in carbon dioxide fixation, as well as the oxidative fragmentation of the pentose substrate in the photorespiration process. Both reactions occur simultaneously and in competition at the same active site. The polypeptide is Ribulose bisphosphate carboxylase large chain (Zygnema circumcarinatum (Green alga)).